The primary structure comprises 302 residues: 4-diphosphocytidyl-2-C-methyl-D-erythritol kinase (302 aa).

Lys32 is a catalytic residue. An ATP-binding site is contributed by 115 to 125 (PMGGGVGGGSS). Asp157 is an active-site residue.

The protein belongs to the GHMP kinase family. IspE subfamily.

It carries out the reaction 4-CDP-2-C-methyl-D-erythritol + ATP = 4-CDP-2-C-methyl-D-erythritol 2-phosphate + ADP + H(+). The protein operates within isoprenoid biosynthesis; isopentenyl diphosphate biosynthesis via DXP pathway; isopentenyl diphosphate from 1-deoxy-D-xylulose 5-phosphate: step 3/6. In terms of biological role, catalyzes the phosphorylation of the position 2 hydroxy group of 4-diphosphocytidyl-2C-methyl-D-erythritol. This is 4-diphosphocytidyl-2-C-methyl-D-erythritol kinase from Actinobacillus succinogenes (strain ATCC 55618 / DSM 22257 / CCUG 43843 / 130Z).